The primary structure comprises 208 residues: Uracil phosphoribosyltransferase (208 aa).

Residues R78, R103, and 130–138 (DPMLATGGS) contribute to the 5-phospho-alpha-D-ribose 1-diphosphate site. Residues I193 and 198–200 (GDA) each bind uracil. D199 is a binding site for 5-phospho-alpha-D-ribose 1-diphosphate.

Belongs to the UPRTase family. Mg(2+) serves as cofactor.

The enzyme catalyses UMP + diphosphate = 5-phospho-alpha-D-ribose 1-diphosphate + uracil. Its pathway is pyrimidine metabolism; UMP biosynthesis via salvage pathway; UMP from uracil: step 1/1. Allosterically activated by GTP. Functionally, catalyzes the conversion of uracil and 5-phospho-alpha-D-ribose 1-diphosphate (PRPP) to UMP and diphosphate. The polypeptide is Uracil phosphoribosyltransferase (Tolumonas auensis (strain DSM 9187 / NBRC 110442 / TA 4)).